Reading from the N-terminus, the 94-residue chain is Large ribosomal subunit protein bL28 (94 aa).

It belongs to the bacterial ribosomal protein bL28 family.

The protein is Large ribosomal subunit protein bL28 of Novosphingobium aromaticivorans (strain ATCC 700278 / DSM 12444 / CCUG 56034 / CIP 105152 / NBRC 16084 / F199).